Consider the following 363-residue polypeptide: uncharacterized protein (363 aa).

4 helical membrane-spanning segments follow: residues 34–54, 60–80, 91–111, and 112–132; these read YVYDIALIAISILCIVSIILW, LALFAIAPALAIGALGVTLLV, EIADTVAAVSLPFILTGTAAG, and LMFSAIAVGGGAVILANPLFL. The segment covering 232-245 has biased composition (polar residues); the sequence is SSTTTHSTDSEQIL. The interval 232-363 is disordered; the sequence is SSTTTHSTDS…SSQKKKPSRK (132 aa). 2 stretches are compositionally biased toward low complexity: residues 246–268 and 275–285; these read TSVSPQSSDTESSSSSSFHTPPN and DSNSSDSSSSS. A compositionally biased stretch (basic and acidic residues) spans 322–342; that stretch reads SRSERNAQHHRNKDQEQRQDS.

It belongs to the chlamydial CPn_0443/CT_005/TC_0273 family.

It is found in the cell membrane. This is an uncharacterized protein from Chlamydia trachomatis serovar D (strain ATCC VR-885 / DSM 19411 / UW-3/Cx).